Reading from the N-terminus, the 370-residue chain is MADNSTILEKLDGLVARFEEISTLITDPAVIADQKRYVKLTKEYKDLDDLMKARKEYIQLLGNIEEAKNILSNESDADMREMAKEEMDNSQERLPALEEEIKLMLVPADPQDSKNAILEIRGGAGGDEAAIFAGDLFRMYAKFCETKGWKMEVSNANEGTAGGYKEIVCSVTGDNVYGILKYESGVHRVQRVPATETQGRVHTSAASVAVLPEAEEFDVVINEGEIKWDTFRSGGAGGQNVNKVESGVRLRYIWKNPNTGVAEEILIECTETRDQPKNKERALARLRTFIYDKEHQKYIDDIASKRKTMVSTGDRSAKIRTYNYPQGRITDHRINYTIYNLAAFMDGDIQDCIDHLIVAENAERLKESEL.

Gln-239 is modified (N5-methylglutamine).

This sequence belongs to the prokaryotic/mitochondrial release factor family. Methylated by PrmC. Methylation increases the termination efficiency of RF1.

The protein resides in the cytoplasm. Its function is as follows. Peptide chain release factor 1 directs the termination of translation in response to the peptide chain termination codons UAG and UAA. This chain is Peptide chain release factor 1, found in Bacteroides thetaiotaomicron (strain ATCC 29148 / DSM 2079 / JCM 5827 / CCUG 10774 / NCTC 10582 / VPI-5482 / E50).